The sequence spans 56 residues: Small ribosomal subunit protein uS14 (56 aa).

Zn(2+) is bound by residues cysteine 21, cysteine 24, cysteine 39, and cysteine 42.

This sequence belongs to the universal ribosomal protein uS14 family. Component of the 40S small ribosomal subunit. Requires Zn(2+) as cofactor.

The protein resides in the cytoplasm. It is found in the cytosol. It localises to the rough endoplasmic reticulum. This Bombyx mori (Silk moth) protein is Small ribosomal subunit protein uS14 (RpS29).